A 327-amino-acid chain; its full sequence is GTPase Obg (327 aa).

The region spanning 2-160 (HLFKDSLNLI…LNLRLELSLI (159 aa)) is the Obg domain. An OBG-type G domain is found at 161-326 (ADIGLVGLPN…LVSEFFSLVK (166 aa)). GTP contacts are provided by residues 167–174 (GLPNAGKS), 192–196 (FTTKI), 213–216 (DLPG), 280–283 (SKLD), and 307–309 (SIY). Residues S174 and T194 each contribute to the Mg(2+) site.

This sequence belongs to the TRAFAC class OBG-HflX-like GTPase superfamily. OBG GTPase family. Monomer. The cofactor is Mg(2+).

The protein localises to the cytoplasm. In terms of biological role, an essential GTPase which binds GTP, GDP and possibly (p)ppGpp with moderate affinity, with high nucleotide exchange rates and a fairly low GTP hydrolysis rate. Plays a role in control of the cell cycle, stress response, ribosome biogenesis and in those bacteria that undergo differentiation, in morphogenesis control. This Borrelia duttonii (strain Ly) protein is GTPase Obg.